We begin with the raw amino-acid sequence, 763 residues long: Translation initiation factor IF-2 (763 aa).

The tract at residues 52-178 (KQKKVQTSQN…KDEAIKHETK (127 aa)) is disordered. Residues 65 to 82 (SNDENKKITNKNTEKTTE) are compositionally biased toward basic and acidic residues. The span at 86 to 96 (TVDSNKQNNSN) shows a compositional bias: polar residues. Composition is skewed to basic and acidic residues over residues 105–116 (RNNDEESVSHFD) and 123–135 (KSEM…LNDK). The span at 136–145 (KKNKNFKNTK) shows a compositional bias: basic residues. Over residues 146-161 (NKNSNNNKNSKNNKNN) the composition is skewed to low complexity. Positions 162 to 178 (KNNDHNRKDEAIKHETK) are enriched in basic and acidic residues. A tr-type G domain is found at 265–434 (ERPPVITVMG…LMVAEMEELK (170 aa)). The interval 274–281 (GHVDHGKT) is G1. 274-281 (GHVDHGKT) lines the GTP pocket. The interval 299-303 (GITQH) is G2. A G3 region spans residues 320 to 323 (DTPG). Residues 320–324 (DTPGH) and 374–377 (NKID) each bind GTP. The G4 stretch occupies residues 374–377 (NKID). Positions 410–412 (SAR) are G5.

This sequence belongs to the TRAFAC class translation factor GTPase superfamily. Classic translation factor GTPase family. IF-2 subfamily.

The protein resides in the cytoplasm. One of the essential components for the initiation of protein synthesis. Protects formylmethionyl-tRNA from spontaneous hydrolysis and promotes its binding to the 30S ribosomal subunits. Also involved in the hydrolysis of GTP during the formation of the 70S ribosomal complex. The chain is Translation initiation factor IF-2 from Finegoldia magna (strain ATCC 29328 / DSM 20472 / WAL 2508) (Peptostreptococcus magnus).